A 401-amino-acid chain; its full sequence is Imidazolonepropionase (401 aa).

Residues H70 and H72 each contribute to the Fe(3+) site. 2 residues coordinate Zn(2+): H70 and H72. R79, Y142, and H175 together coordinate 4-imidazolone-5-propanoate. Y142 serves as a coordination point for N-formimidoyl-L-glutamate. H240 is a Fe(3+) binding site. Zn(2+) is bound at residue H240. Q243 lines the 4-imidazolone-5-propanoate pocket. D315 is a Fe(3+) binding site. D315 provides a ligand contact to Zn(2+). N-formimidoyl-L-glutamate is bound by residues N317 and G319. T320 serves as a coordination point for 4-imidazolone-5-propanoate.

Belongs to the metallo-dependent hydrolases superfamily. HutI family. Requires Zn(2+) as cofactor. Fe(3+) is required as a cofactor.

It is found in the cytoplasm. It carries out the reaction 4-imidazolone-5-propanoate + H2O = N-formimidoyl-L-glutamate. It functions in the pathway amino-acid degradation; L-histidine degradation into L-glutamate; N-formimidoyl-L-glutamate from L-histidine: step 3/3. Its function is as follows. Catalyzes the hydrolytic cleavage of the carbon-nitrogen bond in imidazolone-5-propanoate to yield N-formimidoyl-L-glutamate. It is the third step in the universal histidine degradation pathway. The protein is Imidazolonepropionase of Caulobacter vibrioides (strain ATCC 19089 / CIP 103742 / CB 15) (Caulobacter crescentus).